The primary structure comprises 523 residues: 2-isopropylmalate synthase (523 aa).

One can recognise a Pyruvate carboxyltransferase domain in the interval 12 to 274 (VVIFDTTLRD…WNKIDTTQLT (263 aa)). Mn(2+) is bound by residues aspartate 21, histidine 209, histidine 211, and asparagine 245. Residues 398-523 (KLLSLSVIAG…AQGAAAAAAS (126 aa)) are regulatory domain.

This sequence belongs to the alpha-IPM synthase/homocitrate synthase family. LeuA type 1 subfamily. In terms of assembly, homodimer. The cofactor is Mn(2+).

The protein resides in the cytoplasm. The catalysed reaction is 3-methyl-2-oxobutanoate + acetyl-CoA + H2O = (2S)-2-isopropylmalate + CoA + H(+). It participates in amino-acid biosynthesis; L-leucine biosynthesis; L-leucine from 3-methyl-2-oxobutanoate: step 1/4. Its function is as follows. Catalyzes the condensation of the acetyl group of acetyl-CoA with 3-methyl-2-oxobutanoate (2-ketoisovalerate) to form 3-carboxy-3-hydroxy-4-methylpentanoate (2-isopropylmalate). In Bradyrhizobium sp. (strain BTAi1 / ATCC BAA-1182), this protein is 2-isopropylmalate synthase.